Reading from the N-terminus, the 174-residue chain is Large ribosomal subunit protein uL10 (174 aa).

It belongs to the universal ribosomal protein uL10 family. In terms of assembly, part of the ribosomal stalk of the 50S ribosomal subunit. The N-terminus interacts with L11 and the large rRNA to form the base of the stalk. The C-terminus forms an elongated spine to which L12 dimers bind in a sequential fashion forming a multimeric L10(L12)X complex.

Its function is as follows. Forms part of the ribosomal stalk, playing a central role in the interaction of the ribosome with GTP-bound translation factors. The sequence is that of Large ribosomal subunit protein uL10 from Bordetella bronchiseptica (strain ATCC BAA-588 / NCTC 13252 / RB50) (Alcaligenes bronchisepticus).